The sequence spans 221 residues: Ras-related protein Rab-27A (221 aa).

Ser2 carries the post-translational modification N-acetylserine. Ser2 carries the phosphoserine modification. Residue Gly16 to Ser24 participates in GTP binding. The Effector region signature appears at Phe38–Phe46. GTP is bound by residues Asp74–Gln78, Asn133–Asp136, and Ser163–Ala165. Cysteines 123 and 188 form a disulfide. S-geranylgeranyl cysteine attachment occurs at residues Cys219 and Cys221. The residue at position 221 (Cys221) is a Cysteine methyl ester.

It belongs to the small GTPase superfamily. Rab family. In terms of assembly, binds SYTL1, SLAC2B, MYRIP, SYTL3, SYTL4 and SYTL5. Interacts with RPH3A and RPH3A. Binds MLPH and SYTL2. Interacts with UNC13D. Does not interact with the BLOC-3 complex (heterodimer of HPS1 and HPS4). Interacts (GDP-bound form preferentially) with DENND10. As to expression, high levels in eye, intestine, lung, pancreas and spleen, and low or absent in brain, liver, heart, kidney, and skeletal muscle.

The protein localises to the membrane. It localises to the melanosome. The protein resides in the late endosome. Its subcellular location is the lysosome. The enzyme catalyses GTP + H2O = GDP + phosphate + H(+). Regulated by guanine nucleotide exchange factors (GEFs) which promote the exchange of bound GDP for free GTP, GTPase activating proteins (GAPs) which increase the GTP hydrolysis activity, and GDP dissociation inhibitors which inhibit the dissociation of the nucleotide from the GTPase. Activated by GEFs such as DENND10. Its function is as follows. Small GTPase which cycles between active GTP-bound and inactive GDP-bound states. In its active state, binds to a variety of effector proteins to regulate homeostasis of late endocytic pathway, including endosomal positioning, maturation and secretion. Plays a role in cytotoxic granule exocytosis in lymphocytes. Required for both granule maturation and granule docking and priming at the immunologic synapse. The sequence is that of Ras-related protein Rab-27A (Rab27a) from Rattus norvegicus (Rat).